Consider the following 82-residue polypeptide: RNA-binding protein Hfq (82 aa).

Positions 11–71 (DTFLNHVRKT…ISTIMPGAPI (61 aa)) constitute a Sm domain.

It belongs to the Hfq family. Homohexamer.

RNA chaperone that binds small regulatory RNA (sRNAs) and mRNAs to facilitate mRNA translational regulation in response to envelope stress, environmental stress and changes in metabolite concentrations. Also binds with high specificity to tRNAs. This Bradyrhizobium diazoefficiens (strain JCM 10833 / BCRC 13528 / IAM 13628 / NBRC 14792 / USDA 110) protein is RNA-binding protein Hfq.